Consider the following 223-residue polypeptide: Ribose-5-phosphate isomerase A (223 aa).

Residues 32 to 35 (TGST), 83 to 86 (DGAD), and 96 to 99 (KGGG) each bind substrate. Residue Glu105 is the Proton acceptor of the active site. Lys123 contacts substrate.

The protein belongs to the ribose 5-phosphate isomerase family. Homodimer.

It catalyses the reaction aldehydo-D-ribose 5-phosphate = D-ribulose 5-phosphate. It participates in carbohydrate degradation; pentose phosphate pathway; D-ribose 5-phosphate from D-ribulose 5-phosphate (non-oxidative stage): step 1/1. Its function is as follows. Catalyzes the reversible conversion of ribose-5-phosphate to ribulose 5-phosphate. The polypeptide is Ribose-5-phosphate isomerase A (Acinetobacter baumannii (strain ATCC 17978 / DSM 105126 / CIP 53.77 / LMG 1025 / NCDC KC755 / 5377)).